Reading from the N-terminus, the 257-residue chain is Protein windbeutel (257 aa).

The first 21 residues, 1-21 (MMHILVTLLLVAIHSIPTTWA), serve as a signal peptide directing secretion. Positions 24-27 (CTGC) are CXXC motif. The Prevents secretion from ER motif lies at 254-257 (KEEL).

As to quaternary structure, homodimer. Interacts with pip; the interaction is direct and does not require pip to be folded. In terms of tissue distribution, briefly expressed in the follicle cells of the ovary, at around the time when the dorsoventral axis of the egg chamber is first established.

It is found in the endoplasmic reticulum lumen. In terms of biological role, probable chaperone protein involved in dorsoventral axis patterning in early embryos. Probably acts by folding and targeting pipe (pip) into the Golgi. The chain is Protein windbeutel from Drosophila melanogaster (Fruit fly).